Here is a 273-residue protein sequence, read N- to C-terminus: Light-independent protochlorophyllide reductase iron-sulfur ATP-binding protein (273 aa).

ATP contacts are provided by residues 12–17 (GIGKST) and lysine 41. Serine 16 serves as a coordination point for Mg(2+). Cysteine 97 and cysteine 131 together coordinate [4Fe-4S] cluster. Position 182-183 (182-183 (NR)) interacts with ATP.

Belongs to the NifH/BchL/ChlL family. As to quaternary structure, homodimer. Protochlorophyllide reductase is composed of three subunits; BchL, BchN and BchB. The cofactor is [4Fe-4S] cluster.

It carries out the reaction chlorophyllide a + oxidized 2[4Fe-4S]-[ferredoxin] + 2 ADP + 2 phosphate = protochlorophyllide a + reduced 2[4Fe-4S]-[ferredoxin] + 2 ATP + 2 H2O. Its pathway is porphyrin-containing compound metabolism; bacteriochlorophyll biosynthesis (light-independent). Its function is as follows. Component of the dark-operative protochlorophyllide reductase (DPOR) that uses Mg-ATP and reduced ferredoxin to reduce ring D of protochlorophyllide (Pchlide) to form chlorophyllide a (Chlide). This reaction is light-independent. The L component serves as a unique electron donor to the NB-component of the complex, and binds Mg-ATP. The chain is Light-independent protochlorophyllide reductase iron-sulfur ATP-binding protein from Roseiflexus castenholzii (strain DSM 13941 / HLO8).